We begin with the raw amino-acid sequence, 351 residues long: UDP-3-O-acylglucosamine N-acyltransferase (351 aa).

The active-site Proton acceptor is H240.

It belongs to the transferase hexapeptide repeat family. LpxD subfamily. As to quaternary structure, homotrimer.

It carries out the reaction a UDP-3-O-[(3R)-3-hydroxyacyl]-alpha-D-glucosamine + a (3R)-hydroxyacyl-[ACP] = a UDP-2-N,3-O-bis[(3R)-3-hydroxyacyl]-alpha-D-glucosamine + holo-[ACP] + H(+). The protein operates within bacterial outer membrane biogenesis; LPS lipid A biosynthesis. Its function is as follows. Catalyzes the N-acylation of UDP-3-O-acylglucosamine using 3-hydroxyacyl-ACP as the acyl donor. Is involved in the biosynthesis of lipid A, a phosphorylated glycolipid that anchors the lipopolysaccharide to the outer membrane of the cell. The sequence is that of UDP-3-O-acylglucosamine N-acyltransferase from Ectopseudomonas mendocina (strain ymp) (Pseudomonas mendocina).